A 217-amino-acid polypeptide reads, in one-letter code: UPF0502 protein VIBHAR_05349 (217 aa).

The protein belongs to the UPF0502 family.

The chain is UPF0502 protein VIBHAR_05349 from Vibrio campbellii (strain ATCC BAA-1116).